We begin with the raw amino-acid sequence, 197 residues long: MNKKSILKKPKNAQSTQEKQLITWSKSLIDEARSRLQYDFFALEWIEKLVDPVSLETLEEARKYLRKSDYDQVVKERKLVNLCGYPVCPYEPKQQTRYKLEDSGMKVYGGLNYYCSKDCFLKSCQYMVELSDEPLWIREDAREAMKQHLDPRQDEAFRKELENKKIEDVRLLLQALPVGYKAKVGEIVEHPLANEQS.

The RTR1-type zinc-finger motif lies at 60–139 (EARKYLRKSD…LSDEPLWIRE (80 aa)). Positions 83, 88, 115, and 119 each coordinate Zn(2+).

This sequence belongs to the RPAP2 family.

The protein localises to the cytoplasm. It is found in the nucleus. The catalysed reaction is O-phospho-L-seryl-[protein] + H2O = L-seryl-[protein] + phosphate. The enzyme catalyses O-phospho-L-threonyl-[protein] + H2O = L-threonyl-[protein] + phosphate. Its function is as follows. Putative RNA polymerase II subunit B1 C-terminal domain (CTD) phosphatase involved in RNA polymerase II transcription regulation. This chain is Putative RNA polymerase II subunit B1 CTD phosphatase rtr1, found in Schizosaccharomyces pombe (strain 972 / ATCC 24843) (Fission yeast).